The chain runs to 254 residues: Protein orai-2 (254 aa).

Helical transmembrane passes span 66-83 (TSAL…EVQL), 94-114 (LIAF…ALLI), 148-168 (LAWG…VVLL), and 196-216 (AALV…VFTI).

Belongs to the Orai family. Oligomerizes in homomeric and heteromeric ORAI complexes. Native CRAC channels most likely consist of hexameric ORAI heteromers, implying that diverse ORAI1, ORAI2 and ORAI3 subunit combinations with distinct biophysical properties can operate in a cell-type specific way. Interacts with STIM1; this regulates channel activity. Interacts with CRACR2A/EFCAB4B.

The protein resides in the cell membrane. The enzyme catalyses Ca(2+)(in) = Ca(2+)(out). With respect to regulation, CRAC channels are regulated by fast Ca(2+)-dependent inactivation (FCDI), a mechanism that limits Ca(2+) influx and cell toxicity. ORAI2 channels display prominent FCDI. Inhibited by lanthanides such as Gd(3+) ions. Functionally, pore-forming subunit of inward rectifying Ca(2+) release-activated Ca(2+) (CRAC) channels. Assembles with ORAI1 and ORAI3 to form hexameric CRAC channels that mediate Ca(2+) influx upon depletion of endoplasmic reticulum Ca(2+) store and channel activation by Ca(2+) sensor STIM1, a process known as store-operated Ca(2+) entry (SOCE). Various pore subunit combinations may account for distinct CRAC channel spatiotemporal and cell-type specific dynamics. ORAI1 mainly contributes to the generation of Ca(2+) plateaus involved in sustained Ca(2+) entry and is dispensable for cytosolic Ca(2+) oscillations, whereas ORAI2 and ORAI3 generate oscillatory patterns. CRAC channels assemble in Ca(2+) signaling microdomains where Ca(2+) influx is coupled to calmodulin and calcineurin signaling and activation of NFAT transcription factors recruited to ORAI1 via AKAP5. CRAC channels are the main pathway for Ca(2+) influx in T cells and promote the immune response to pathogens by activating NFAT-dependent cytokine and chemokine transcription. This is Protein orai-2 (ORAI2) from Homo sapiens (Human).